The sequence spans 250 residues: Probable transcriptional regulatory protein Rxyl_1318 (250 aa).

This sequence belongs to the TACO1 family.

The protein localises to the cytoplasm. This chain is Probable transcriptional regulatory protein Rxyl_1318, found in Rubrobacter xylanophilus (strain DSM 9941 / JCM 11954 / NBRC 16129 / PRD-1).